A 351-amino-acid chain; its full sequence is Protein Tex24 (351 aa).

3 disordered regions span residues P69–S101, P117–K144, and E275–M298. Positions H73–R83 are enriched in basic residues. A compositionally biased stretch (basic and acidic residues) spans E275–H285.

As to expression, specific to testis, where it is expressed in spermatogonia.

The protein localises to the nucleus. In terms of biological role, nuclear factor which might have a role in spermatogenesis. The protein is Protein Tex24 of Mus musculus (Mouse).